The primary structure comprises 130 residues: Interferon alpha-inducible protein 27-like protein 2 (130 aa).

3 helical membrane passes run 8 to 28 (AAVGGALAVGAVPVVLSAMGF), 43 to 63 (MSAAAIANGGGVSAGSLVATL), and 66 to 86 (VGAAGLSTSSNILLASVGSVL). The tract at residues 93–130 (SPSSSLPAEPEAKEDEARENVPQGEPPKPPLKSEKHEE) is disordered.

This sequence belongs to the IFI6/IFI27 family.

Its subcellular location is the mitochondrion membrane. Functionally, plays a role in the apoptotic process and has a pro-apoptotic activity. This is Interferon alpha-inducible protein 27-like protein 2 from Homo sapiens (Human).